The sequence spans 359 residues: Peptide chain release factor 1 (359 aa).

Glutamine 233 carries the post-translational modification N5-methylglutamine.

The protein belongs to the prokaryotic/mitochondrial release factor family. In terms of processing, methylated by PrmC. Methylation increases the termination efficiency of RF1.

It is found in the cytoplasm. In terms of biological role, peptide chain release factor 1 directs the termination of translation in response to the peptide chain termination codons UAG and UAA. This chain is Peptide chain release factor 1, found in Orientia tsutsugamushi (strain Boryong) (Rickettsia tsutsugamushi).